A 283-amino-acid polypeptide reads, in one-letter code: Bis(5'-nucleosyl)-tetraphosphatase, symmetrical (283 aa).

Belongs to the Ap4A hydrolase family.

It catalyses the reaction P(1),P(4)-bis(5'-adenosyl) tetraphosphate + H2O = 2 ADP + 2 H(+). Functionally, hydrolyzes diadenosine 5',5'''-P1,P4-tetraphosphate to yield ADP. This chain is Bis(5'-nucleosyl)-tetraphosphatase, symmetrical, found in Serratia proteamaculans (strain 568).